We begin with the raw amino-acid sequence, 102 residues long: Movement protein (102 aa).

Residues 43 to 63 form a helical membrane-spanning segment; that stretch reads VVALIVILFAVGIVYLAYTLF. Residues 82–102 are disordered; that stretch reads IGFGNTPLRRPGEGNPNGGPV.

It belongs to the mastrevirus movement protein family. In terms of assembly, interacts with the capsid protein (CP). Part of a MP-CP-viral DNA complex.

The protein localises to the host membrane. Its function is as follows. Involved in the viral transport within, and between cells. This is Movement protein from Tobacco yellow dwarf virus (strain Australia) (TYDV).